We begin with the raw amino-acid sequence, 196 residues long: Putative NADH dehydrogenase/NAD(P)H nitroreductase Pnuc_0932 (196 aa).

The protein belongs to the nitroreductase family. HadB/RutE subfamily. FMN serves as cofactor.

The protein is Putative NADH dehydrogenase/NAD(P)H nitroreductase Pnuc_0932 of Polynucleobacter asymbioticus (strain DSM 18221 / CIP 109841 / QLW-P1DMWA-1) (Polynucleobacter necessarius subsp. asymbioticus).